Consider the following 260-residue polypeptide: Voltage-dependent calcium channel gamma-6 subunit (260 aa).

The next 4 membrane-spanning stretches (helical) occupy residues 43–63 (LLVA…EFWV), 143–163 (VIAV…IMVL), 169–189 (SLLR…FVSL), and 221–241 (LGCG…FLLL).

The protein belongs to the PMP-22/EMP/MP20 family. CACNG subfamily. As to quaternary structure, interacts with CACNA1C. Identified in a complex with the L-type calcium channel subunits CACNA1C, CACNA2D1 and either CACNB1 or CACNB2. As to expression, detected in brain and heart (at protein level).

The protein resides in the cell membrane. In terms of biological role, regulates the activity of L-type calcium channels that contain CACNA1C as pore-forming subunit. In Mus musculus (Mouse), this protein is Voltage-dependent calcium channel gamma-6 subunit (Cacng6).